The sequence spans 266 residues: 3-methyl-2-oxobutanoate hydroxymethyltransferase (266 aa).

The Mg(2+) site is built by Asp43 and Asp82. 3-methyl-2-oxobutanoate-binding positions include 43–44 (DS), Asp82, and Lys110. Glu112 lines the Mg(2+) pocket. The Proton acceptor role is filled by Glu179.

It belongs to the PanB family. Homodecamer; pentamer of dimers. Mg(2+) is required as a cofactor.

The protein resides in the cytoplasm. It catalyses the reaction 3-methyl-2-oxobutanoate + (6R)-5,10-methylene-5,6,7,8-tetrahydrofolate + H2O = 2-dehydropantoate + (6S)-5,6,7,8-tetrahydrofolate. It participates in cofactor biosynthesis; (R)-pantothenate biosynthesis; (R)-pantoate from 3-methyl-2-oxobutanoate: step 1/2. Its function is as follows. Catalyzes the reversible reaction in which hydroxymethyl group from 5,10-methylenetetrahydrofolate is transferred onto alpha-ketoisovalerate to form ketopantoate. This chain is 3-methyl-2-oxobutanoate hydroxymethyltransferase, found in Psychrobacter cryohalolentis (strain ATCC BAA-1226 / DSM 17306 / VKM B-2378 / K5).